The sequence spans 78 residues: Small ribosomal subunit protein bS18 (78 aa).

The protein belongs to the bacterial ribosomal protein bS18 family. As to quaternary structure, part of the 30S ribosomal subunit. Forms a tight heterodimer with protein bS6.

In terms of biological role, binds as a heterodimer with protein bS6 to the central domain of the 16S rRNA, where it helps stabilize the platform of the 30S subunit. The polypeptide is Small ribosomal subunit protein bS18 (Kineococcus radiotolerans (strain ATCC BAA-149 / DSM 14245 / SRS30216)).